Reading from the N-terminus, the 67-residue chain is ATP synthase F(0) complex subunit 8 (67 aa).

Residues 8–24 (TWFIMIFSMFLTLFILF) traverse the membrane as a helical segment. Lys-54 carries the post-translational modification N6-acetyllysine; alternate. An N6-succinyllysine; alternate modification is found at Lys-54. At Lys-57 the chain carries N6-acetyllysine.

It belongs to the ATPase protein 8 family. In terms of assembly, component of the ATP synthase complex composed at least of ATP5F1A/subunit alpha, ATP5F1B/subunit beta, ATP5MC1/subunit c (homooctomer), MT-ATP6/subunit a, MT-ATP8/subunit 8, ATP5ME/subunit e, ATP5MF/subunit f, ATP5MG/subunit g, ATP5MK/subunit k, ATP5MJ/subunit j, ATP5F1C/subunit gamma, ATP5F1D/subunit delta, ATP5F1E/subunit epsilon, ATP5PF/subunit F6, ATP5PB/subunit b, ATP5PD/subunit d, ATP5PO/subunit OSCP. ATP synthase complex consists of a soluble F(1) head domain (subunits alpha(3) and beta(3)) - the catalytic core - and a membrane F(0) domain - the membrane proton channel (subunits c, a, 8, e, f, g, k and j). These two domains are linked by a central stalk (subunits gamma, delta, and epsilon) rotating inside the F1 region and a stationary peripheral stalk (subunits F6, b, d, and OSCP). Interacts with PRICKLE3.

The protein localises to the mitochondrion membrane. Its function is as follows. Subunit 8, of the mitochondrial membrane ATP synthase complex (F(1)F(0) ATP synthase or Complex V) that produces ATP from ADP in the presence of a proton gradient across the membrane which is generated by electron transport complexes of the respiratory chain. ATP synthase complex consist of a soluble F(1) head domain - the catalytic core - and a membrane F(1) domain - the membrane proton channel. These two domains are linked by a central stalk rotating inside the F(1) region and a stationary peripheral stalk. During catalysis, ATP synthesis in the catalytic domain of F(1) is coupled via a rotary mechanism of the central stalk subunits to proton translocation. In vivo, can only synthesize ATP although its ATP hydrolase activity can be activated artificially in vitro. Part of the complex F(0) domain. This is ATP synthase F(0) complex subunit 8 from Canis lupus familiaris (Dog).